The primary structure comprises 91 residues: uncharacterized protein (91 aa).

2 consecutive transmembrane segments (helical) span residues 22-42 (WPVIAVGALAWLVAAVAAFVV) and 53-73 (VAGLATGLLGTTIFVWQLAAA).

It localises to the cell membrane. This is an uncharacterized protein from Mycobacterium bovis (strain ATCC BAA-935 / AF2122/97).